The chain runs to 290 residues: Short-chain dehydrogenase srdE (290 aa).

4 residues coordinate NADP(+): Ile11, Thr37, Asp58, and Asn86. The chain crosses the membrane as a helical span at residues 125–145 (LIASSGIIVNIGSIGGVVPFV). Tyr150 lines the NADP(+) pocket. The active-site Proton donor is Tyr150. Asn151 carries an N-linked (GlcNAc...) asparagine glycan. NADP(+) is bound by residues Lys154, Val183, and Thr185. Residue Lys154 is the Lowers pKa of active site Tyr of the active site.

It belongs to the short-chain dehydrogenases/reductases (SDR) family.

Its subcellular location is the membrane. Its function is as follows. Short-chain dehydrogenase; part of the gene cluster that mediates the biosynthesis of sordarial, a salicylic aldehyde structurally related to the phytotoxin pyriculol. The most interesting aspect of this pathway is formation of an aromatic product from the highly reducing polyketide synthase srdA. SrdA synthesizes a reduced polyketide chain from one molecule of acetyl-CoA and five molecules of malonyl-CoA. The polyketide chain is then reductively released as an aldehyde. The oxidoreductases srdC, srdD and srdE then oxidize one of the hydroxy groups to facilitate the intramolecular aldol condensation, followed by dehydration to yield a salicylic aldehyde. This aldehyde can undergo facile reduction by endogenous reductases to yield the alcohol 1-hydroxy-2-hydroxymethyl-3-pent-1,3-dienylbenzene. The flavin-dependent srdI counteract against the propensity of the aldehydes to be reduced under physiological conditions and is responsible for reoxidizing 1-hydroxy-2-hydroxymethyl-3-pent-1,3-dienylbenzene back to the salicylic aldehyde. This salicylic aldehyde is then selectively epoxidized by the cupin-domain-containing oxidoreductase srdB to yield the epoxide, which can be hydrolyzed stereoselectively by the hydrolase srdG to give the final product sordarial. This Neurospora crassa (strain ATCC 24698 / 74-OR23-1A / CBS 708.71 / DSM 1257 / FGSC 987) protein is Short-chain dehydrogenase srdE.